A 38-amino-acid polypeptide reads, in one-letter code: Anthranilate phosphoribosyltransferase (38 aa).

Belongs to the anthranilate phosphoribosyltransferase family. As to quaternary structure, homodimer.

It carries out the reaction N-(5-phospho-beta-D-ribosyl)anthranilate + diphosphate = 5-phospho-alpha-D-ribose 1-diphosphate + anthranilate. It participates in amino-acid biosynthesis; L-tryptophan biosynthesis; L-tryptophan from chorismate: step 2/5. In terms of biological role, catalyzes the transfer of the phosphoribosyl group of 5-phosphorylribose-1-pyrophosphate (PRPP) to anthranilate to yield N-(5'-phosphoribosyl)-anthranilate (PRA). The chain is Anthranilate phosphoribosyltransferase (trpD) from Serratia marcescens.